Consider the following 131-residue polypeptide: Insulin-like 3 (131 aa).

The signal sequence occupies residues 1–20; it reads MDPRLPAWALVLLGPALVFA. 3 disulfide bridges follow: Cys34–Cys116, Cys46–Cys129, and Cys115–Cys120. The propeptide at 58 to 104 is c peptide like; sequence PATGGDRELLQWLERRHLLHGLVADSNLTLGPGLQPLPQTSHHHRHH.

It belongs to the insulin family. As to quaternary structure, heterodimer of a B chain and an A chain linked by two disulfide bonds. Expressed in prenatal and postnatal Leydig cells. Found as well in the corpus luteum, trophoblast, fetal membranes and breast.

Its subcellular location is the secreted. Seems to play a role in testicular function. May be a trophic hormone with a role in testicular descent in fetal life. Is a ligand for LGR8 receptor. The chain is Insulin-like 3 (INSL3) from Homo sapiens (Human).